Consider the following 407-residue polypeptide: Putative nickel insertion protein (407 aa).

It belongs to the LarC family.

This Gloeothece citriformis (strain PCC 7424) (Cyanothece sp. (strain PCC 7424)) protein is Putative nickel insertion protein.